Here is a 707-residue protein sequence, read N- to C-terminus: Mitochondrial disaggregase (707 aa).

The N-terminal 36 residues, 1–36 (MLGSLVLRRKALAPRLLLRLLRSPTLRGHGGASGRN), are a transit peptide targeting the mitochondrion. The autoinhibitory stretch occupies residues 92-126 (PGPEETLPGQDSWNGVPSRAGLGMCALAAALVVHC). ANK repeat units lie at residues 133 to 162 (NKDA…DVNA), 166 to 195 (LGWT…DPNL), 265 to 295 (KGCT…PLQR), and 298 to 327 (MGHT…EKQR). 10 residues coordinate ATP: H346, I348, S383, G384, I385, G386, K387, T388, E455, and N496. The segment at 507–535 (LQLRQEALEMSRNRIAENLGDVQISDKIT) is regulatory; slows ATPase and disaggregase activities. R561 provides a ligand contact to ATP. At K589 the chain carries N6-acetyllysine. Residue R620 coordinates ATP.

This sequence belongs to the ClpA/ClpB family. In terms of assembly, homododecamer when substrate-bound; the homododecamer consists of 2 homohexamers stacked head-to-head via ANK repeat-mediated interactions. The active substrate-bound form is likely to exist in a dynamic equilibrium between homohexamers and homododecamers. Homotetradecamer in the unbound state which is remodeled upon substrate binding into the homododecamer. Interacts with PHB and PHB2. Interacts with MAVS; the interaction is enhanced by Sendai virus infection. Proteolytically cleaved by protease PARL. ATP-dependent protein disaggregase activity is stimulated by PARL-mediated cleavage of the N-terminal autoinhibitory peptide. In terms of tissue distribution, widely expressed (at protein level). Expressed in fetal, as well as in adult tissues, with highest levels in adult brain, including thalamus, hippocampus, occipital cortex and parietal cortex. Low expression in granulocytes.

The protein resides in the mitochondrion intermembrane space. It carries out the reaction ATP + H2O = ADP + phosphate + H(+). Disaggregase activity is inhibited by ADP. Functionally, functions as a regulatory ATPase and participates in secretion/protein trafficking process. Has ATP-dependent protein disaggregase activity and is required to maintain the solubility of key mitochondrial proteins. Involved in mitochondrial-mediated antiviral innate immunity, activates RIG-I-mediated signal transduction and production of IFNB1 and pro-inflammatory cytokine IL6. Plays a role in granulocyte differentiation. The chain is Mitochondrial disaggregase from Homo sapiens (Human).